The primary structure comprises 860 residues: Alanine--tRNA ligase (860 aa).

His-563, His-567, Cys-665, and His-669 together coordinate Zn(2+).

Belongs to the class-II aminoacyl-tRNA synthetase family. It depends on Zn(2+) as a cofactor.

The protein resides in the cytoplasm. It catalyses the reaction tRNA(Ala) + L-alanine + ATP = L-alanyl-tRNA(Ala) + AMP + diphosphate. In terms of biological role, catalyzes the attachment of alanine to tRNA(Ala) in a two-step reaction: alanine is first activated by ATP to form Ala-AMP and then transferred to the acceptor end of tRNA(Ala). Also edits incorrectly charged Ser-tRNA(Ala) and Gly-tRNA(Ala) via its editing domain. This is Alanine--tRNA ligase from Vibrio parahaemolyticus serotype O3:K6 (strain RIMD 2210633).